The sequence spans 312 residues: Pyridoxal kinase (312 aa).

Residue Met1 is modified to N-acetylmethionine. Residues Ser12 and Thr47 each coordinate pyridoxal. Residue Thr47 coordinates pyridoxal 5'-phosphate. Position 59 is a phosphoserine (Ser59). Position 113 (Asp113) interacts with ATP. Residue Asp113 participates in Na(+) binding. Asp118 contributes to the Mg(2+) binding site. Thr148 is a Na(+) binding site. 150–153 serves as a coordination point for ATP; it reads NQFE. Ser164 bears the Phosphoserine mark. Residue Thr186 participates in Na(+) binding. 186–187 serves as a coordination point for ATP; it reads TS. Ser213 carries the post-translational modification Phosphoserine. ATP-binding positions include 226–228 and Thr233; that span reads VDA. 234–235 lines the pyridoxal 5'-phosphate pocket; the sequence is GD. The active-site Proton acceptor is the Asp235. The residue at position 285 (Ser285) is a Phosphoserine.

This sequence belongs to the pyridoxine kinase family. In terms of assembly, homodimer. Mg(2+) is required as a cofactor. Requires Zn(2+) as cofactor. The cofactor is Co(2+). Mn(2+) serves as cofactor. As to expression, ubiquitous. Highly expressed in testis. In terms of tissue distribution, in adult testis and spermatozoa.

The protein localises to the cytoplasm. The protein resides in the cytosol. The enzyme catalyses pyridoxal + ATP = pyridoxal 5'-phosphate + ADP + H(+). The catalysed reaction is pyridoxamine + ATP = pyridoxamine 5'-phosphate + ADP + H(+). It catalyses the reaction pyridoxine + ATP = pyridoxine 5'-phosphate + ADP + H(+). It participates in cofactor metabolism; pyridoxal 5'-phosphate salvage; pyridoxal 5'-phosphate from pyridoxal: step 1/1. It functions in the pathway cofactor metabolism; pyridoxal 5'-phosphate salvage; pyridoxine 5'-phosphate from pyridoxine: step 1/1. Its pathway is cofactor metabolism; pyridoxal 5'-phosphate salvage; pyridoxamine 5'-phosphate from pyridoxamine: step 1/1. With respect to regulation, catalytic activity is inhibited competitively by 4-deoxypyridoxine, and is also inhibited by the benzodiazepine receptor ligands 1012S and ethyl-beta-carboline-3-carboxylate. Inhibited by ginkgotoxin, theophylline, lamotrigine, enprofylline, theobromine, and caffeine. Activity is increased in the presence of K(+)or Na(+). Catalyzes the phosphorylation of the dietary vitamin B6 vitamers pyridoxal (PL), pyridoxine (PN) and pyridoxamine (PM) to form pyridoxal 5'-phosphate (PLP), pyridoxine 5'-phosphate (PNP) and pyridoxamine 5'-phosphate (PMP), respectively. PLP is the active form of vitamin B6, and acts as a cofactor for over 140 different enzymatic reactions. This chain is Pyridoxal kinase, found in Homo sapiens (Human).